The sequence spans 207 residues: MDADLPYLTGLDAKVAAIVAPVLADMGFELVRVAILGRESPTVQIMADRADGTLIAIEDCEQISHAVGAVLDVEDPLPGAWTLEVSSAGIDRPLTRAKDWTRFAGHLAKAEVNIPIDGRKRFSGILLGAEDGFGRLRLEDGTEVALPLSDMRRARLVLTDELIAASAHMMRAPGGAPEEGEEDTTEAAPEGAGKSPKPGRRPARKTH.

The disordered stretch occupies residues 171–207 (RAPGGAPEEGEEDTTEAAPEGAGKSPKPGRRPARKTH). The span at 197-207 (KPGRRPARKTH) shows a compositional bias: basic residues.

Belongs to the RimP family.

The protein resides in the cytoplasm. Its function is as follows. Required for maturation of 30S ribosomal subunits. The sequence is that of Ribosome maturation factor RimP from Gluconacetobacter diazotrophicus (strain ATCC 49037 / DSM 5601 / CCUG 37298 / CIP 103539 / LMG 7603 / PAl5).